Reading from the N-terminus, the 79-residue chain is UPF0180 protein BCAH820_1484 (79 aa).

It belongs to the UPF0180 family.

This chain is UPF0180 protein BCAH820_1484, found in Bacillus cereus (strain AH820).